The following is a 326-amino-acid chain: MPLTSDVKEELSRVEVSKTTVRAAELATILRFSGGLHLISNRIAVESELDTPLLARRVRKDLAELYGVRSDISVIPASGMRRATHYLVRVMEGGETLARQTGLLDARRRPIRGLPNRLTTGSREEIAAVWRGAFLAAGTLTDPGRSAALEVTCPGNEAAMALVGAAGRLDVSAKAREVRGVHRVVIRDGDAIGQMLRAMGAQGTVVNWEEMRQRREVRATANRLVNFDDANLRRSAQAAVAACARVERAMEILGPDIPEHLKYAGDLRLRFRDSSLDELGHHADPPMTKDAVAGRIRRLLAMADKKAVDEGLPGTDANLPADLDDV.

A DNA-binding region (H-T-H motif) is located at residues 275-308; that stretch reads SLDELGHHADPPMTKDAVAGRIRRLLAMADKKAV.

Belongs to the WhiA family.

Its function is as follows. Involved in cell division and chromosome segregation. The sequence is that of Probable cell division protein WhiA from Clavibacter sepedonicus (Clavibacter michiganensis subsp. sepedonicus).